We begin with the raw amino-acid sequence, 139 residues long: Glucanase inhibitor protein 3 (139 aa).

The Peptidase S1 domain occupies 1–138 (VLTLEKPSKF…GIEWINSVIK (138 aa)). 2 disulfide bridges follow: cysteine 61–cysteine 73 and cysteine 83–cysteine 114.

It belongs to the peptidase S1 family.

It localises to the secreted. Its function is as follows. Secreted effector that suppresses host plant glucan elicitor-mediated defense responses. Targets host endoglucanases and inhibits the endoglucanase-mediated release of elicitor-active glucan oligosaccharides from P.sojae cell walls. The sequence is that of Glucanase inhibitor protein 3 from Phytophthora sojae (Soybean stem and root rot agent).